Here is a 341-residue protein sequence, read N- to C-terminus: Elongation factor G (341 aa).

The protein belongs to the GTP-binding elongation factor family. EF-G/EF-2 subfamily.

Its subcellular location is the cytoplasm. Its function is as follows. Catalyzes the GTP-dependent ribosomal translocation step during translation elongation. During this step, the ribosome changes from the pre-translocational (PRE) to the post-translocational (POST) state as the newly formed A-site-bound peptidyl-tRNA and P-site-bound deacylated tRNA move to the P and E sites, respectively. Catalyzes the coordinated movement of the two tRNA molecules, the mRNA and conformational changes in the ribosome. The polypeptide is Elongation factor G (fus) (Streptomyces ramocissimus).